The sequence spans 264 residues: DNA-directed RNA polymerase subunit Rpo3 (264 aa).

[3Fe-4S] cluster is bound by residues Cys203, Cys206, and Cys209.

This sequence belongs to the archaeal Rpo3/eukaryotic RPB3 RNA polymerase subunit family. Part of the RNA polymerase complex. The cofactor is [3Fe-4S] cluster.

The protein localises to the cytoplasm. It catalyses the reaction RNA(n) + a ribonucleoside 5'-triphosphate = RNA(n+1) + diphosphate. In terms of biological role, DNA-dependent RNA polymerase (RNAP) catalyzes the transcription of DNA into RNA using the four ribonucleoside triphosphates as substrates. The polypeptide is DNA-directed RNA polymerase subunit Rpo3 (Archaeoglobus fulgidus (strain ATCC 49558 / DSM 4304 / JCM 9628 / NBRC 100126 / VC-16)).